Reading from the N-terminus, the 513-residue chain is Sulfhydryl oxidase 1 (513 aa).

The N-terminal stretch at 1 to 30 (MAAAAVARRVVLVLVLAAASLAAAPRGAAA) is a signal peptide. In terms of domain architecture, Thioredoxin spans 31–174 (RSLGGREGPG…LLKWINNQMK (144 aa)). An N-linked (GlcNAc...) asparagine glycan is attached at N51. Residues C76 and C79 each act as nucleophile in the active site. C76 and C79 are disulfide-bonded. Residues N193 and N266 are each glycosylated (N-linked (GlcNAc...) asparagine). A disulfide bond links C301 and C313. Positions 304 to 406 (SKSETRGFSC…GDPLFPKVTW (103 aa)) constitute an ERV/ALR sulfhydryl oxidase domain. Residues R309, W316, H320, E350, H354, 377 to 384 (WSTHNKVN), K403, and W406 each bind FAD. A disulfide bond links C348 and C351. C412 and C415 are oxidised to a cystine.

Requires FAD as cofactor.

The protein resides in the secreted. The catalysed reaction is 2 R'C(R)SH + O2 = R'C(R)S-S(R)CR' + H2O2. Catalyzes the oxidation of sulfhydryl groups in peptide and protein thiols to disulfides with the reduction of oxygen to hydrogen peroxide. May contribute to disulfide bond formation in a variety of secreted proteins. The polypeptide is Sulfhydryl oxidase 1 (QSOX1) (Oryza sativa subsp. japonica (Rice)).